The primary structure comprises 512 residues: Lysine--tRNA ligase (512 aa).

Residues E408 and E415 each contribute to the Mg(2+) site.

The protein belongs to the class-II aminoacyl-tRNA synthetase family. As to quaternary structure, homodimer. Mg(2+) serves as cofactor.

It is found in the cytoplasm. The catalysed reaction is tRNA(Lys) + L-lysine + ATP = L-lysyl-tRNA(Lys) + AMP + diphosphate. This is Lysine--tRNA ligase from Prochlorococcus marinus subsp. pastoris (strain CCMP1986 / NIES-2087 / MED4).